The sequence spans 524 residues: Glucose-6-phosphate isomerase (524 aa).

The active-site Proton donor is Glu346. Residues His377 and Lys492 contribute to the active site.

Belongs to the GPI family.

The protein localises to the cytoplasm. It carries out the reaction alpha-D-glucose 6-phosphate = beta-D-fructose 6-phosphate. Its pathway is carbohydrate biosynthesis; gluconeogenesis. The protein operates within carbohydrate degradation; glycolysis; D-glyceraldehyde 3-phosphate and glycerone phosphate from D-glucose: step 2/4. Catalyzes the reversible isomerization of glucose-6-phosphate to fructose-6-phosphate. The chain is Glucose-6-phosphate isomerase from Chlamydia trachomatis serovar A (strain ATCC VR-571B / DSM 19440 / HAR-13).